Reading from the N-terminus, the 274-residue chain is 2,3,4,5-tetrahydropyridine-2,6-dicarboxylate N-succinyltransferase (274 aa).

Residues arginine 104 and aspartate 141 each coordinate substrate.

Belongs to the transferase hexapeptide repeat family. Homotrimer.

The protein localises to the cytoplasm. The catalysed reaction is (S)-2,3,4,5-tetrahydrodipicolinate + succinyl-CoA + H2O = (S)-2-succinylamino-6-oxoheptanedioate + CoA. It participates in amino-acid biosynthesis; L-lysine biosynthesis via DAP pathway; LL-2,6-diaminopimelate from (S)-tetrahydrodipicolinate (succinylase route): step 1/3. The chain is 2,3,4,5-tetrahydropyridine-2,6-dicarboxylate N-succinyltransferase from Shewanella sp. (strain ANA-3).